Reading from the N-terminus, the 445-residue chain is Methylphloroacetophenone oxidase (445 aa).

A helical transmembrane segment spans residues 25–45 (VLSIALIGVACAISIRSILYV). Asn-51 is a glycosylation site (N-linked (GlcNAc...) asparagine).

It belongs to the cytochrome P450 family.

Its subcellular location is the membrane. Its pathway is secondary metabolite biosynthesis. In terms of biological role, methylphloroacetophenone oxidase; part of the gene cluster that mediates the biosynthesis of usnic acid, a dibenzofuran lichen product possessing a broad spectrum of biological activities. Two genes, mpas and mpao, comprise the usnic acid biosynthetic gene cluster with a single post-PKS enzyme, the methylphloracetophenone oxidase (mpao). The methylphloroacetophenone synthase (mpas) is a non-reducing polyketide synthase that produces methylphloracetophenone from acetate via a methylated tetraketide intermediate. The methylphloroacetophenone oxidase then carries out the oxidative dimerization of methylphloracetophenone to usnic acid. The sequence is that of Methylphloroacetophenone oxidase from Cladonia uncialis (Cup lichen).